We begin with the raw amino-acid sequence, 1308 residues long: Receptor tyrosine-protein kinase erbB-4 (1308 aa).

An N-terminal signal peptide occupies residues 1-25; sequence MKPATGLWVWVSLLVAAGTVQPSDS. The Extracellular portion of the chain corresponds to 26–651; that stretch reads QSVCAGTENK…STLPQHARTP (626 aa). Cys29 and Cys56 are joined by a disulfide. N-linked (GlcNAc...) asparagine glycans are attached at residues Asn138, Asn174, and Asn181. Disulfide bonds link Cys156–Cys186, Cys189–Cys197, Cys193–Cys205, Cys213–Cys221, Cys217–Cys229, Cys230–Cys238, Cys234–Cys246, Cys249–Cys258, Cys262–Cys289, Cys293–Cys304, Cys308–Cys323, and Cys326–Cys330. N-linked (GlcNAc...) asparagine glycosylation occurs at Asn253. Asn358, Asn410, Asn473, and Asn495 each carry an N-linked (GlcNAc...) asparagine glycan. 10 cysteine pairs are disulfide-bonded: Cys503-Cys512, Cys507-Cys520, Cys523-Cys532, Cys536-Cys552, Cys555-Cys569, Cys559-Cys577, Cys580-Cys589, Cys593-Cys614, Cys617-Cys625, and Cys621-Cys633. Residue Asn548 is glycosylated (N-linked (GlcNAc...) asparagine). Asn576 is a glycosylation site (N-linked (GlcNAc...) asparagine). The N-linked (GlcNAc...) asparagine glycan is linked to Asn620. Residues 652-675 traverse the membrane as a helical segment; that stretch reads LIAAGVIGGLFILVIVGLTFAVYV. The Nuclear localization signal motif lies at 676-684; it reads RRKSIKKKR. The Cytoplasmic portion of the chain corresponds to 676–1308; that stretch reads RRKSIKKKRA…PPYRHRNTVV (633 aa). One can recognise a Protein kinase domain in the interval 718 to 985; sequence LKRVKVLGSG…RMARDPQRYL (268 aa). ATP-binding positions include 724–732, Lys751, 797–799, and 843–848; these read LGSGAFGTV, QLM, and DLAARN. The active-site Proton acceptor is Asp843. Tyr875, Tyr1035, Tyr1056, Tyr1150, Tyr1162, Tyr1188, Tyr1202, Tyr1242, Tyr1258, and Tyr1284 each carry phosphotyrosine; by autocatalysis. 2 short sequence motifs (PPxY motif) span residues 1032–1035 and 1053–1056; these read PPIY and PPAY. Residues 1117-1150 form a disordered region; the sequence is PHVQEDSSTQRYSADPTVFAPERSPRGELDEEGY. The PPxY motif 3 signature appears at 1298-1301; sequence PPPY. Positions 1306-1308 match the PDZ-binding motif; that stretch reads TVV.

It belongs to the protein kinase superfamily. Tyr protein kinase family. EGF receptor subfamily. As to quaternary structure, monomer in the absence of bound ligand. Homodimer or heterodimer with another ERBB family member upon ligand binding, thus forming heterotetramers. Interacts with EGFR and ERBB2. Interacts with CBFA2T3. Interacts with DLG2 (via its PDZ domain), DLG3 (via its PDZ domain), DLG4 (via its PDZ domain) and SNTB2 (via its PDZ domain). Interacts with MUC1. Interacts (via its PPxy motifs) with WWOX. Interacts (via the PPxY motif 3 of isoform JM-A CYT-2) with YAP1 (via the WW domain 1 of isoform 1). Interacts (isoform JM-A CYT-1 and isoform JM-B CYT-1) with WWP1. Interacts (via its intracellular domain) with TRIM28. Interacts (via the intracellular domains of both CYT-1 and CYT-2 isoforms) with KAP1; the interaction does not phosphorylate KAP1 but represses ERBB4-mediated transcriptional activity. Interacts with PRPU, DDX23, MATR3, RBM15, ILF3, KAP1, U5S1, U2SURP, ITCH, HNRNPU, AP2A1, NULC, LEO1, WWP2, IGHG1, HXK1, GRB7 and SRRT. Interacts (phosphorylated isoform JM-A CYT-1 and isoform JM-B CYT-1) with PIK3R1. Interacts with SHC1. Interacts with GRB2. Interacts (soluble intracellular domain) with STAT5A. Interacts (soluble intracellular domain) with BCL2. Interacts (phosphorylated) with STAT1. Post-translationally, isoform JM-A CYT-1 and isoform JM-A CYT-2 are processed by ADAM17. Proteolytic processing in response to ligand or 12-O-tetradecanoylphorbol-13-acetate stimulation results in the production of 120 kDa soluble receptor forms and intermediate membrane-anchored 80 kDa fragments (m80HER4), which are further processed by a presenilin-dependent gamma-secretase to release a cytoplasmic intracellular domain (E4ICD; E4ICD1/s80Cyt1 or E4ICD2/s80Cyt2, depending on the isoform). Membrane-anchored 80 kDa fragments of the processed isoform JM-A CYT-1 are more readily degraded by the proteasome than fragments of isoform JM-A CYT-2, suggesting a prevalence of E4ICD2 over E4ICD1. Isoform JM-B CYT-1 and isoform JM-B CYT-2 lack the ADAM17 cleavage site and are not processed by ADAM17, precluding further processing by gamma-secretase. Autophosphorylated on tyrosine residues in response to ligand binding. Autophosphorylation occurs in trans, i.e. one subunit of the dimeric receptor phosphorylates tyrosine residues on the other subunit. Ligands trigger phosphorylation at specific tyrosine residues, thereby creating binding sites for scaffold proteins and effectors. Constitutively phosphorylated at a basal level when overexpressed in heterologous systems; ligand binding leads to increased phosphorylation. Phosphorylation at Tyr-1035 is important for interaction with STAT1. Phosphorylation at Tyr-1056 is important for interaction with PIK3R1. Phosphorylation at Tyr-1242 is important for interaction with SHC1. Phosphorylation at Tyr-1188 may also contribute to the interaction with SHC1. Isoform JM-A CYT-2 is constitutively phosphorylated on tyrosine residues in a ligand-independent manner. E4ICD2 but not E4ICD1 is phosphorylated on tyrosine residues. In terms of processing, ubiquitinated. During mitosis, the ERBB4 intracellular domain is ubiquitinated by the APC/C complex and targeted to proteasomal degradation. Isoform JM-A CYT-1 and isoform JM-B CYT-1 are ubiquitinated by WWP1. The ERBB4 intracellular domain (E4ICD1) is ubiquitinated, and this involves NEDD4. In terms of tissue distribution, expressed at highest levels in brain, heart, kidney, in addition to skeletal muscle, parathyroid, cerebellum, pituitary, spleen, testis and breast. Lower levels in thymus, lung, salivary gland, and pancreas. Isoform JM-A CYT-1 and isoform JM-B CYT-1 are expressed in cerebellum, but only the isoform JM-B is expressed in the heart.

Its subcellular location is the cell membrane. The protein localises to the nucleus. It localises to the mitochondrion. It catalyses the reaction L-tyrosyl-[protein] + ATP = O-phospho-L-tyrosyl-[protein] + ADP + H(+). Its activity is regulated as follows. Binding of a cognate ligand leads to dimerization and activation by autophosphorylation on tyrosine residues. In vitro kinase activity is increased by Mg(2+). Inhibited by PD153035, lapatinib, gefitinib (iressa, ZD1839), AG1478 and BIBX1382BS. In terms of biological role, tyrosine-protein kinase that plays an essential role as cell surface receptor for neuregulins and EGF family members and regulates development of the heart, the central nervous system and the mammary gland, gene transcription, cell proliferation, differentiation, migration and apoptosis. Required for normal cardiac muscle differentiation during embryonic development, and for postnatal cardiomyocyte proliferation. Required for normal development of the embryonic central nervous system, especially for normal neural crest cell migration and normal axon guidance. Required for mammary gland differentiation, induction of milk proteins and lactation. Acts as cell-surface receptor for the neuregulins NRG1, NRG2, NRG3 and NRG4 and the EGF family members BTC, EREG and HBEGF. Ligand binding triggers receptor dimerization and autophosphorylation at specific tyrosine residues that then serve as binding sites for scaffold proteins and effectors. Ligand specificity and signaling is modulated by alternative splicing, proteolytic processing, and by the formation of heterodimers with other ERBB family members, thereby creating multiple combinations of intracellular phosphotyrosines that trigger ligand- and context-specific cellular responses. Mediates phosphorylation of SHC1 and activation of the MAP kinases MAPK1/ERK2 and MAPK3/ERK1. Isoform JM-A CYT-1 and isoform JM-B CYT-1 phosphorylate PIK3R1, leading to the activation of phosphatidylinositol 3-kinase and AKT1 and protect cells against apoptosis. Isoform JM-A CYT-1 and isoform JM-B CYT-1 mediate reorganization of the actin cytoskeleton and promote cell migration in response to NRG1. Isoform JM-A CYT-2 and isoform JM-B CYT-2 lack the phosphotyrosine that mediates interaction with PIK3R1, and hence do not phosphorylate PIK3R1, do not protect cells against apoptosis, and do not promote reorganization of the actin cytoskeleton and cell migration. Proteolytic processing of isoform JM-A CYT-1 and isoform JM-A CYT-2 gives rise to the corresponding soluble intracellular domains (4ICD) that translocate to the nucleus, promote nuclear import of STAT5A, activation of STAT5A, mammary epithelium differentiation, cell proliferation and activation of gene expression. The ERBB4 soluble intracellular domains (4ICD) colocalize with STAT5A at the CSN2 promoter to regulate transcription of milk proteins during lactation. The ERBB4 soluble intracellular domains can also translocate to mitochondria and promote apoptosis. This Homo sapiens (Human) protein is Receptor tyrosine-protein kinase erbB-4 (ERBB4).